A 416-amino-acid chain; its full sequence is MLRVMTSRNFLTIDDFDIRGKTILLRVDMNSPMDTQGHILDDMRIKSHIATLKDLESAKVVLLAHQSRPGKKDFTTMKPHAHLLSRYLGKQVTYVDDIFGTFAKTHIASMEDGDVIMLENVRFYSEESLERTPAEQANTYMVKKLAPFVDIFLNDAFAVAHRSHLSVVGFTEVLPSGAGRVMEKELVSLDRGVKGGERPSIFVLGGAKVDDSLRVTENVLTSGGADRVLLTGVVANVALAASGVNIGKVNMDFIKSQGYENQIEKARGLLAKFKDRIGLPKDVALNDNRERVEVHISELNSDSLPINDIGLETIVDYTNEIQNSKTVVLNGPAGVSEIEDFALGTHEIIKAAIKSDFSIIGGGHISVEVAHLGLEHRFSHISTGGGACIDYLAGEKLPGVESLKAAYIKYQEAKKL.

Residues 28–30 (DMN), Arg44, 65–68 (HQSR), Arg122, and Arg162 each bind substrate. Residues Glu337 and 362-365 (GGHI) contribute to the ATP site.

It belongs to the phosphoglycerate kinase family. As to quaternary structure, monomer.

The protein resides in the cytoplasm. The enzyme catalyses (2R)-3-phosphoglycerate + ATP = (2R)-3-phospho-glyceroyl phosphate + ADP. It functions in the pathway carbohydrate degradation; glycolysis; pyruvate from D-glyceraldehyde 3-phosphate: step 2/5. This chain is Phosphoglycerate kinase 2, found in Methanosarcina acetivorans (strain ATCC 35395 / DSM 2834 / JCM 12185 / C2A).